The sequence spans 1373 residues: MAKASVELTRELQDSIRRCLSQGAVLQQHRVKLETKPKKFEDRVLALTSWRLHLFPLKVPAKVESSFNVLEIRAFNTLSQNQILVETERGVVSMRLPSAESVDQVTRHVSSALSKVCPGPGCLIRRGNADTPEGPRDTSPNSETSTSTTHSVCGGFSETYAALCDYNGLHCREEVQWDVDTIYHAEDNREFNLLDFSHLESRDLALMVAALAYNQWFTKLYCKDLRLGSEVLEQVLHTLSKSGSLEELVLDNAGLKTDFVQKLAGVFGENGSCVLHALTLSHNPIEDKGFLSLSQQLLCFPAGLTKLCLAKTAVSPRGLQALGQTFGANPAFASSLRYLDLSKNPGLLATDEANALYSFLAQPNALVHLDLSGTDCAVDLLLGALLHGCCSHLTYLNLARNSCSHRKGREAPPAFKQFFSSAYTLSHVNLSATRLPLEALRALLQGLSLNSHLSDLHLDLSSCELRSAGAQALQEQLGAVTCIGSLDLSDNGFDSDLLTLVPALGKNKSLKHLFLGKNFNVKAKTLEEILHKLVQLIQEEDCSLQSLSVADSRLKLRTSILINALGSNTCLAKVDLSGNGMEDIGAKMLSKALQINSSLRTILWDRNNTSALGFLDIARALESNHTLRFMSFPVSDISQAYRSAPERTEDVWQKIQWCLVRNNHSQTCPQEQAFRLQQGLVTSSAEQMLQRLCGRVQEEVRALRLCPLEPVQDELLYARDLIKDAKNSRALFPSLCELGHVLANDGPVRQRLESVASEVSKAVDKELQVILESMVSLTQELCPVAMRVAEGHNKMLSNVAERVTVPRNFIRGALLEQAGQDIQNKLDEVKLSVVTYLTNSIVDEILQELYHSHKSLARHLTQLRTLSDPPGGAGPGQDPSSRGRGRSHDHEETDDELGTNIDTMAIKKQKRCRKIRPVSAFISGSPQDMESQLGSLGIPPGWFSGLGSSQPTASGSWEGLSELPTHGYKLRHQTQGRPRPPRTTPPGPGRPSVPVPGPRQENGMATRLDEGLEDFFSRRVMDESSSYPRTLRTMRPGPSEPPLPALQKRRRRGLFHFRRPRSFKGDRGPGSPTAGLLLPPPPPPPPTQESPPSPDPPSLGNNSSPCWSPEEESSLLPGFGGARGSSFCRKMGTERLEAGDGAPAPGTAQPPRVHGVALPGLGRTKGWSFDGKREGTDPDQEDSTQAWQKRRSSDDAGPGAWKPPPPPQSSKPSFSAMRRAEATWHIAEESAPNHSCQSPSPASQDGEEEKDGALFPERMVPARNAKEPPIGPRPPKPVAVPRGRRAPQVPGGREEAESSSAAPGANKPWLRLGSQQDQEEPEGQVPSDLGRRTAPLKPKRTRRAQSCDKLEPDRRRPPDPAGVCAGTSEPGTD.

Residues 126-151 form a disordered region; that stretch reads RGNADTPEGPRDTSPNSETSTSTTHS. A compositionally biased stretch (low complexity) spans 138–151; the sequence is TSPNSETSTSTTHS. 10 LRR repeats span residues 242–269, 272–299, 333–358, 390–417, 422–446, 453–475, 480–507, 510–536, 541–564, and 568–591; these read SGSLEELVLDNAGLKTDFVQKLAGVFGE, SCVLHALTLSHNPIEDKGFLSLSQQLLC, ASSLRYLDLSKNPGLLATDEANALYS, CSHLTYLNLARNSCSHRKGREAPPAFKQ, AYTLSHVNLSATRLPLEALRALLQG, LSDLHLDLSSCELRSAGAQALQE, VTCIGSLDLSDNGFDSDLLTLVPALGKN, LKHLFLGKNFNVKAKTLEEILHKLVQL, DCSLQSLSVADSRLKLRTSILINA, and NTCLAKVDLSGNGMEDIGAKMLSK. Disordered stretches follow at residues 864-902 and 970-1373; these read RTLSDPPGGAGPGQDPSSRGRGRSHDHEETDDELGTNID and LRHQ…PGTD. Residues 981-997 are compositionally biased toward pro residues; it reads PRTTPPGPGRPSVPVPG. A compositionally biased stretch (basic and acidic residues) spans 1007 to 1022; it reads RLDEGLEDFFSRRVMD. Over residues 1047 to 1062 the composition is skewed to basic residues; sequence QKRRRRGLFHFRRPRS. The segment covering 1078–1097 has biased composition (pro residues); the sequence is LPPPPPPPPTQESPPSPDPP. Over residues 1098–1108 the composition is skewed to low complexity; it reads SLGNNSSPCWS. Residues 1218-1228 are compositionally biased toward basic and acidic residues; that stretch reads RRAEATWHIAE. Residues 1232–1243 are compositionally biased toward polar residues; the sequence is PNHSCQSPSPAS. A compositionally biased stretch (pro residues) spans 1269–1278; that stretch reads PIGPRPPKPV. The span at 1345-1358 shows a compositional bias: basic and acidic residues; sequence QSCDKLEPDRRRPP.

It belongs to the CARMIL family. As to expression, widely expressed, with much higher levels in fetal tissues than in adult ones. Highly expressed in newborn brain.

The protein resides in the cytoplasm. Its subcellular location is the cell membrane. In Rattus norvegicus (Rat), this protein is Capping protein, Arp2/3 and myosin-I linker protein 3 (Carmil3).